The primary structure comprises 121 residues: UPF0102 protein HRM2_30940 (121 aa).

It belongs to the UPF0102 family.

The sequence is that of UPF0102 protein HRM2_30940 from Desulforapulum autotrophicum (strain ATCC 43914 / DSM 3382 / VKM B-1955 / HRM2) (Desulfobacterium autotrophicum).